The following is a 548-amino-acid chain: Calcium-transporting ATPase (548 aa).

The first 21 residues, 1–21, serve as a signal peptide directing secretion; that stretch reads MNFKSTVITAMCCFFSFAVLA. The a divalent metal cation site is built by Asp-37 and Thr-78. Thr-78 functions as the Phosphothreonine intermediate in the catalytic mechanism. Substrate is bound by residues Asn-99 and 160-162; that span reads KDR. The ATP-binding signature appears at 179–187; the sequence is DGKTGDWIT. 5 residues coordinate a divalent metal cation: Asp-305, His-309, Asp-352, His-353, and His-488.

Mg(2+) is required as a cofactor.

It is found in the cell inner membrane. It carries out the reaction Ca(2+)(in) + ATP + H2O = Ca(2+)(out) + ADP + phosphate + H(+). Completely inhibited by vanadate(3-). Also inhibited by lanthanoid atom and phosphate. Not inhibited by N-ethylmaleimide, 1,3-dicyclohexylcarbodiimide, oligomycin, ouabain, valinomycin, nigericin, thapsigargin, cyclopiazonic acid or fluorescein isothiocyanate. Functionally, catalyzes the hydrolysis of ATP coupled with the transport of calcium. Has some hydrolysis activity also with dATP, GTP, UTP, ITP and 4-nitrophenyl phosphate as substrate. No activity with ADP, CTP, acetyl dihydrogen phosphate or AMP-PNP as substrate. This Myroides odoratus (Flavobacterium odoratum) protein is Calcium-transporting ATPase.